Consider the following 428-residue polypeptide: Stromal membrane-associated protein 2 (428 aa).

Residues 13 to 139 (QAVLGSLLSE…INTFRKEKDD (127 aa)) enclose the Arf-GAP domain. A C4-type zinc finger spans residues 28-51 (CADCQAKGPRWASWNIGVFICIRC). Residues 161 to 172 (VKMPQKKEETQQ) show a composition bias toward basic and acidic residues. 2 disordered regions span residues 161–182 (VKMP…KSTE) and 222–258 (SRKV…AGKK).

As to quaternary structure, may interact with clathrin heavy chains.

In terms of biological role, GTPase activating protein. May play a role in clathrin-dependent retrograde transport from early endosomes to the trans-Golgi network. The chain is Stromal membrane-associated protein 2 (SMAP2) from Gallus gallus (Chicken).